Consider the following 489-residue polypeptide: MLFKMRSFVAFVLLLSWFGSCCSLKDQAVDFLKSEDSLKKDLSSDEDSTYLKAFGFHRKTLVRNPYKDLPSRKDRKNRVVAATTTPSSSPEPAPKHVSTKASTVSEPQKRSSTQDVSPSPSAPLANSPIPRNSHSSVPLVVGCVGGAFFLLLVATGLYFFTSKAGKTVNPWRTGLSGQLQKVFVTGIPVLKRSEIEAACEDFSNVIGSCPIGKLFKGTLSSGVEIAVASFATTTAKDWKDSTEIHFRKKIEMLSKINHKNFANLLGYCEEKEPFTRILIFEYAPNGSLFEHLHYKESEHLDWGMRLRIAMGLAYCLDHMHQLNPPIAHTNLVSSSLQLTEDYAVKVSDFSFGSSETETNINNNTVIDTHISALNPEDNIYSFGLLLFEMITGKLIESVNKPDSVDSSLVDFLRGETLAKMVDPTLESYDAKIENIGEVIKSCLRTDPKERPTMQEVTGWLREITGLSPNDATPKLSPLWWAELEVLSTA.

Positions 1–23 are cleaved as a signal peptide; the sequence is MLFKMRSFVAFVLLLSWFGSCCS. The Extracellular portion of the chain corresponds to 24–139; the sequence is LKDQAVDFLK…PRNSHSSVPL (116 aa). The tract at residues 67-130 is disordered; the sequence is KDLPSRKDRK…SAPLANSPIP (64 aa). The segment covering 81–90 has biased composition (low complexity); that stretch reads AATTTPSSSP. Residues 99–116 are compositionally biased toward polar residues; sequence TKASTVSEPQKRSSTQDV. Residues 117–130 are compositionally biased toward low complexity; the sequence is SPSPSAPLANSPIP. Residues 140 to 160 form a helical membrane-spanning segment; sequence VVGCVGGAFFLLLVATGLYFF. Residues 161–489 lie on the Cytoplasmic side of the membrane; the sequence is TSKAGKTVNP…WAELEVLSTA (329 aa). The Protein kinase domain maps to 200–460; it reads EDFSNVIGSC…PTMQEVTGWL (261 aa).

This sequence belongs to the protein kinase superfamily. Ser/Thr protein kinase family.

It localises to the cell membrane. The chain is Inactive receptor-like serine/threonine-protein kinase At2g40270 from Arabidopsis thaliana (Mouse-ear cress).